A 328-amino-acid chain; its full sequence is Oligopeptide transport ATP-binding protein AppD (328 aa).

The 252-residue stretch at 5–256 (LEVNNLKTYF…PLHPYTEGLL (252 aa)) folds into the ABC transporter domain. 41-48 (GESGSGKS) provides a ligand contact to ATP.

The protein belongs to the ABC transporter superfamily.

It localises to the cell membrane. This protein is a component of an oligopeptide permease, a binding protein-dependent transport system. This APP system can completely substitute for the OPP system in both sporulation and genetic competence, though, unlike OPP, is incapable of transporting tripeptides. Probably responsible for energy coupling to the transport system. This Bacillus subtilis (strain 168) protein is Oligopeptide transport ATP-binding protein AppD (appD).